A 286-amino-acid chain; its full sequence is Phosphoribosylaminoimidazole-succinocarboxamide synthase (286 aa).

It belongs to the SAICAR synthetase family.

The catalysed reaction is 5-amino-1-(5-phospho-D-ribosyl)imidazole-4-carboxylate + L-aspartate + ATP = (2S)-2-[5-amino-1-(5-phospho-beta-D-ribosyl)imidazole-4-carboxamido]succinate + ADP + phosphate + 2 H(+). The protein operates within purine metabolism; IMP biosynthesis via de novo pathway; 5-amino-1-(5-phospho-D-ribosyl)imidazole-4-carboxamide from 5-amino-1-(5-phospho-D-ribosyl)imidazole-4-carboxylate: step 1/2. This chain is Phosphoribosylaminoimidazole-succinocarboxamide synthase, found in Actinobacillus succinogenes (strain ATCC 55618 / DSM 22257 / CCUG 43843 / 130Z).